Here is a 435-residue protein sequence, read N- to C-terminus: D-amino acid dehydrogenase (435 aa).

Val3–Trp17 serves as a coordination point for FAD.

Belongs to the DadA oxidoreductase family. The cofactor is FAD.

It catalyses the reaction a D-alpha-amino acid + A + H2O = a 2-oxocarboxylate + AH2 + NH4(+). Its pathway is amino-acid degradation; D-alanine degradation; NH(3) and pyruvate from D-alanine: step 1/1. Oxidative deamination of D-amino acids. The sequence is that of D-amino acid dehydrogenase from Xylella fastidiosa (strain M23).